A 254-amino-acid polypeptide reads, in one-letter code: Protein GltF (254 aa).

The signal sequence occupies residues 1-25; that stretch reads MFFKKNLTTAAICAALSVAAFSAMA. Residues 213-229 form a helical membrane-spanning segment; the sequence is PVAITAVTFPLLIDAAV.

The protein to E.coli YhcF.

It is found in the cell membrane. Functionally, involved in induction of the so-called NTR enzymes in response to nitrogen deprivation, as well as in glutamate biosynthesis. May mediate the glutamate-dependent repression of the GLT operon. In Escherichia coli (strain K12), this protein is Protein GltF (gltF).